The following is a 190-amino-acid chain: Nuclear transcription factor Y subunit A-7 (190 aa).

Residues 1–33 (MTSSIHELSDNIGSHEKQEQRDSHFQPPIPSAR) are disordered. Residues 7–24 (ELSDNIGSHEKQEQRDSH) show a composition bias toward basic and acidic residues. Residues 103–126 (FVNAKQYHGILRRRQSRARLESQN) carry the Subunit association domain (SAD) motif. A DNA-binding region (NFYA/HAP2-type) is located at residues 133–158 (KPYLHESRHLHAIRRPRGCGGRFLNA). The segment at 147-190 (RPRGCGGRFLNAKKEDEHHEDSSHEEKSNLSAGKSAMAASSGTS) is disordered. Residues 158–174 (AKKEDEHHEDSSHEEKS) show a composition bias toward basic and acidic residues. The segment covering 177 to 190 (SAGKSAMAASSGTS) has biased composition (low complexity).

Belongs to the NFYA/HAP2 subunit family. In terms of assembly, heterotrimeric transcription factor composed of three components, NF-YA, NF-YB and NF-YC. NF-YB and NF-YC must interact and dimerize for NF-YA association and DNA binding.

The protein localises to the nucleus. In terms of biological role, stimulates the transcription of various genes by recognizing and binding to a CCAAT motif in promoters. The chain is Nuclear transcription factor Y subunit A-7 (NFYA7) from Arabidopsis thaliana (Mouse-ear cress).